Consider the following 216-residue polypeptide: Uracil phosphoribosyltransferase (216 aa).

5-phospho-alpha-D-ribose 1-diphosphate contacts are provided by residues arginine 85, arginine 110, and 135–143; that span reads DPMVATGYS. Residues isoleucine 200 and 205–207 each bind uracil; that span reads GDA. 5-phospho-alpha-D-ribose 1-diphosphate is bound at residue aspartate 206.

Belongs to the UPRTase family. Mg(2+) is required as a cofactor.

The catalysed reaction is UMP + diphosphate = 5-phospho-alpha-D-ribose 1-diphosphate + uracil. It participates in pyrimidine metabolism; UMP biosynthesis via salvage pathway; UMP from uracil: step 1/1. With respect to regulation, allosterically activated by GTP. In terms of biological role, catalyzes the conversion of uracil and 5-phospho-alpha-D-ribose 1-diphosphate (PRPP) to UMP and diphosphate. The sequence is that of Uracil phosphoribosyltransferase from Paraburkholderia phymatum (strain DSM 17167 / CIP 108236 / LMG 21445 / STM815) (Burkholderia phymatum).